A 98-amino-acid polypeptide reads, in one-letter code: U1-theraphotoxin-Ap1a (98 aa).

Positions 1–23 (MRSLTLAAVLACSLLLVFHTSAA) are cleaved as a signal peptide. Positions 24–50 (EELEVQDGHLMNPGDGDTALATVDDER) are excised as a propeptide. Disulfide bonds link Cys54–Cys84, Cys58–Cys90, and Cys72–Cys95. The interval 63–84 (DGKSKEGKPCKPKGDKNKDKKC) is disordered.

The protein belongs to the neurotoxin 12 (Hwtx-2) family. 01 (Ap1a) subfamily. In terms of tissue distribution, expressed by the venom gland.

The protein resides in the secreted. Is toxic to both insects and mammals. Induces reversible paralysis when injected into S.frugiperda larvae. Reduces both the amplitude and frequency of responses from muscle (GF-TTM and GF-DLM) pathways in the D.melanogaster giant fiber circuit, suggesting an action at the neuromuscular junction, which is mediated by glutamatergic receptors. In mice, intracranial injection of 30 ug causes increased urination, myoclonus, hypermotility with circular movements followed by respiratory and generalized seizures resulting in death within 25-35 minutes of injection. The protein is U1-theraphotoxin-Ap1a of Acanthoscurria paulensis (Brazilian giant black tarantula spider).